Consider the following 366-residue polypeptide: Aminomethyltransferase (366 aa).

It belongs to the GcvT family. In terms of assembly, the glycine cleavage system is composed of four proteins: P, T, L and H.

The catalysed reaction is N(6)-[(R)-S(8)-aminomethyldihydrolipoyl]-L-lysyl-[protein] + (6S)-5,6,7,8-tetrahydrofolate = N(6)-[(R)-dihydrolipoyl]-L-lysyl-[protein] + (6R)-5,10-methylene-5,6,7,8-tetrahydrofolate + NH4(+). The glycine cleavage system catalyzes the degradation of glycine. The chain is Aminomethyltransferase from Bacillus cereus (strain 03BB102).